Consider the following 118-residue polypeptide: Large ribosomal subunit protein uL24 (118 aa).

The protein belongs to the universal ribosomal protein uL24 family. Part of the 50S ribosomal subunit.

Its function is as follows. One of two assembly initiator proteins, it binds directly to the 5'-end of the 23S rRNA, where it nucleates assembly of the 50S subunit. Functionally, one of the proteins that surrounds the polypeptide exit tunnel on the outside of the subunit. In Prochlorococcus marinus (strain AS9601), this protein is Large ribosomal subunit protein uL24.